The chain runs to 220 residues: Homeobox-leucine zipper protein ATHB-21 (220 aa).

Residues 26–48 form a disordered region; it reads VPQQGGEAKPTRRRKRKSKSVVV. The segment at residues 58-117 is a DNA-binding region (homeobox); the sequence is GWFRKRKLSDEQVRMLEISFEDDHKLESERKDRLASELGLDPRQVAVWFQNRRARWKNKR. The tract at residues 118 to 146 is leucine-zipper; the sequence is VEDEYTKLKNAYETTVVEKCRLDSEVIHL.

Belongs to the HD-ZIP homeobox family. Class I subfamily. As to expression, widely expressed.

The protein resides in the nucleus. Functionally, probable transcription factor. This chain is Homeobox-leucine zipper protein ATHB-21 (ATHB-21), found in Arabidopsis thaliana (Mouse-ear cress).